The following is a 724-amino-acid chain: Catalase-peroxidase (724 aa).

The segment at residues 98-226 is a cross-link (tryptophyl-tyrosyl-methioninium (Trp-Tyr) (with M-252)); the sequence is WHSAGTYRIA…LAAVMMGLIY (129 aa). Histidine 99 acts as the Proton acceptor in catalysis. A cross-link (tryptophyl-tyrosyl-methioninium (Tyr-Met) (with W-98)) is located at residues 226 to 252; sequence YVNPEGVDGNPDPLKTAQDMRVTFARM. Heme b is bound at residue histidine 267.

This sequence belongs to the peroxidase family. Peroxidase/catalase subfamily. In terms of assembly, homodimer or homotetramer. Heme b is required as a cofactor. In terms of processing, formation of the three residue Trp-Tyr-Met cross-link is important for the catalase, but not the peroxidase activity of the enzyme.

The catalysed reaction is H2O2 + AH2 = A + 2 H2O. It carries out the reaction 2 H2O2 = O2 + 2 H2O. In terms of biological role, bifunctional enzyme with both catalase and broad-spectrum peroxidase activity. The sequence is that of Catalase-peroxidase from Vibrio cholerae serotype O1 (strain ATCC 39315 / El Tor Inaba N16961).